The primary structure comprises 375 residues: Platelet-derived growth factor receptor-like protein (375 aa).

The signal sequence occupies residues 1 to 21 (MKVWLLLGLLLVHEALEDVTG). The disordered stretch occupies residues 22–64 (QHLPKNKRPKEPGENRIKPTNKKVKPKIPKIKDRDSADSTPKT). Over residues 40–50 (PTNKKVKPKIP) the composition is skewed to basic residues. The 98-residue stretch at 62–159 (PKTQSIMMQV…GYICRKDETK (98 aa)) folds into the Ig-like C2-type 1 domain. Cysteine 96 and cysteine 143 are disulfide-bonded. Residues asparagine 132 and asparagine 219 are each glycosylated (N-linked (GlcNAc...) asparagine). An Ig-like C2-type 2 domain is found at 272–375 (PSTTILASSN…TTVATTVEFS (104 aa)). Cysteine 293 and cysteine 357 form a disulfide bridge.

In terms of assembly, forms a complex composed of PDGFRL, TNK2 and GRB2.

It is found in the secreted. This chain is Platelet-derived growth factor receptor-like protein (PDGFRL), found in Macaca fascicularis (Crab-eating macaque).